Reading from the N-terminus, the 116-residue chain is Fluoride-specific ion channel FluC 1 (116 aa).

The next 4 helical transmembrane spans lie at 1-21, 31-51, 58-78, and 92-112; these read MGKL…RYTV, IPAG…FLTF, MVYL…TFAY, and FFLN…IAYL. Residues glycine 68 and threonine 71 each coordinate Na(+).

The protein belongs to the fluoride channel Fluc/FEX (TC 1.A.43) family.

The protein resides in the cell membrane. The enzyme catalyses fluoride(in) = fluoride(out). Na(+) is not transported, but it plays an essential structural role and its presence is essential for fluoride channel function. Functionally, fluoride-specific ion channel. Important for reducing fluoride concentration in the cell, thus reducing its toxicity. The sequence is that of Fluoride-specific ion channel FluC 1 from Methanosarcina barkeri (strain Fusaro / DSM 804).